A 139-amino-acid chain; its full sequence is Protein spalt-accessory (139 aa).

The first 16 residues, 1-16 (MKLLIALLALVTAAIA), serve as a signal peptide directing secretion. The span at 60–75 (GIGQGGVHPGQGGFAG) shows a compositional bias: gly residues. The segment at 60–139 (GIGQGGVHPG…HHEHHGHHRH (80 aa)) is disordered. Residues 109–121 (NPHEYPEHHGEHH) are compositionally biased toward basic and acidic residues. Over residues 122–139 (REHHEHHGHHEHHGHHRH) the composition is skewed to basic residues.

The protein resides in the secreted. In terms of biological role, likely to be involved in the establishment of the head. The chain is Protein spalt-accessory (sala) from Drosophila simulans (Fruit fly).